We begin with the raw amino-acid sequence, 456 residues long: Cysteine--tRNA ligase (456 aa).

Cys28 serves as a coordination point for Zn(2+). A 'HIGH' region motif is present at residues 30–40 (MTVYDYCHLGH). Residues Cys209, His234, and Glu238 each contribute to the Zn(2+) site. A 'KMSKS' region motif is present at residues 266–270 (KMSKS). Lys269 is a binding site for ATP.

Belongs to the class-I aminoacyl-tRNA synthetase family. As to quaternary structure, monomer. It depends on Zn(2+) as a cofactor.

It is found in the cytoplasm. It carries out the reaction tRNA(Cys) + L-cysteine + ATP = L-cysteinyl-tRNA(Cys) + AMP + diphosphate. The sequence is that of Cysteine--tRNA ligase from Dechloromonas aromatica (strain RCB).